A 230-amino-acid chain; its full sequence is 3-beta-hydroxysteroid-Delta(8),Delta(7)-isomerase (230 aa).

N-acetylthreonine is present on Thr-2. 4 helical membrane-spanning segments follow: residues 29–49 (WHIL…TWLL), 66–86 (LCWF…FVLY), 121–141 (METI…IAFL), and 185–205 (FWFY…VLVL). Positions 61-204 (WRRLSLCWFA…LWLVLPGVLV (144 aa)) constitute an EXPERA domain.

This sequence belongs to the EBP family.

The protein resides in the endoplasmic reticulum membrane. The protein localises to the nucleus envelope. It is found in the cytoplasmic vesicle. The enzyme catalyses lathosterol = 5alpha-cholest-8-en-3beta-ol. It carries out the reaction zymosterol = 5alpha-cholesta-7,24-dien-3beta-ol. It catalyses the reaction 5,6alpha-epoxy-5alpha-cholestan-3beta-ol + H2O = 5alpha-cholestane-3beta,5,6beta-triol. The catalysed reaction is 5,6beta-epoxy-5beta-cholestan-3beta-ol + H2O = 5alpha-cholestane-3beta,5,6beta-triol. It participates in steroid biosynthesis; cholesterol biosynthesis. Its activity is regulated as follows. Cholestenol Delta-isomerase and cholesterol-5,6-epoxide hydrolase (ChEH) activities are inhibited by tamoxifen and the selective AEBS ligand (4-benzyl-phenoxy)-ethyl-N-pyrrolidine (PBPE). ChEH activity is inhibited by oleic acid. In terms of biological role, isomerase that catalyzes the conversion of Delta(8)-sterols to their corresponding Delta(7)-isomers a catalytic step in the postlanosterol biosynthesis of cholesterol. Functionally, component of the microsomal antiestrogen binding site (AEBS), a multiproteic complex at the ER membrane that consists of an association between EBP and 7-dehydrocholesterol reductase/DHCR7. This complex is responsible for cholesterol-5,6-epoxide hydrolase (ChEH) activity, which consists in the hydration of cholesterol-5,6-epoxides (5,6-EC) into cholestane-3beta,5alpha,6beta-triol (CT). The precise role of each component of this complex has not been described yet. This is 3-beta-hydroxysteroid-Delta(8),Delta(7)-isomerase from Homo sapiens (Human).